Consider the following 377-residue polypeptide: Nitric oxide reductase FlRd-NAD(+) reductase (377 aa).

It belongs to the FAD-dependent oxidoreductase family. FAD is required as a cofactor.

It localises to the cytoplasm. The enzyme catalyses 2 reduced [nitric oxide reductase rubredoxin domain] + NAD(+) + H(+) = 2 oxidized [nitric oxide reductase rubredoxin domain] + NADH. It functions in the pathway nitrogen metabolism; nitric oxide reduction. One of at least two accessory proteins for anaerobic nitric oxide (NO) reductase. Reduces the rubredoxin moiety of NO reductase. The sequence is that of Nitric oxide reductase FlRd-NAD(+) reductase from Shigella dysenteriae serotype 1 (strain Sd197).